The sequence spans 571 residues: Proline--tRNA ligase (571 aa).

Belongs to the class-II aminoacyl-tRNA synthetase family. ProS type 1 subfamily. Homodimer.

It localises to the cytoplasm. It catalyses the reaction tRNA(Pro) + L-proline + ATP = L-prolyl-tRNA(Pro) + AMP + diphosphate. In terms of biological role, catalyzes the attachment of proline to tRNA(Pro) in a two-step reaction: proline is first activated by ATP to form Pro-AMP and then transferred to the acceptor end of tRNA(Pro). As ProRS can inadvertently accommodate and process non-cognate amino acids such as alanine and cysteine, to avoid such errors it has two additional distinct editing activities against alanine. One activity is designated as 'pretransfer' editing and involves the tRNA(Pro)-independent hydrolysis of activated Ala-AMP. The other activity is designated 'posttransfer' editing and involves deacylation of mischarged Ala-tRNA(Pro). The misacylated Cys-tRNA(Pro) is not edited by ProRS. This Thermodesulfovibrio yellowstonii (strain ATCC 51303 / DSM 11347 / YP87) protein is Proline--tRNA ligase.